We begin with the raw amino-acid sequence, 247 residues long: ATP synthase subunit a, chloroplastic (247 aa).

5 consecutive transmembrane segments (helical) span residues 38-58 (QVLI…IIAV), 95-115 (VPFI…GALL), 134-154 (INTT…AGLT), 199-219 (LVVV…VMFL), and 220-240 (GLFT…AYIG).

It belongs to the ATPase A chain family. In terms of assembly, F-type ATPases have 2 components, CF(1) - the catalytic core - and CF(0) - the membrane proton channel. CF(1) has five subunits: alpha(3), beta(3), gamma(1), delta(1), epsilon(1). CF(0) has four main subunits: a, b, b' and c.

It localises to the plastid. Its subcellular location is the chloroplast thylakoid membrane. Its function is as follows. Key component of the proton channel; it plays a direct role in the translocation of protons across the membrane. This chain is ATP synthase subunit a, chloroplastic, found in Ranunculus macranthus (Large buttercup).